Here is a 205-residue protein sequence, read N- to C-terminus: Holliday junction branch migration complex subunit RuvA (205 aa).

A domain I region spans residues 1–64 (MIGKLKGVVD…EDQIRLFGFS (64 aa)). The domain II stretch occupies residues 65–143 (SAAERDWFRL…GFSASEPLAA (79 aa)). The flexible linker stretch occupies residues 144-152 (QLGGGGVAS). The domain III stretch occupies residues 153-205 (AQGGAAADAVSALVNLGYGVPQANAAIAAALRGAGEGAKTEVLIRLGLKELAK).

It belongs to the RuvA family. Homotetramer. Forms an RuvA(8)-RuvB(12)-Holliday junction (HJ) complex. HJ DNA is sandwiched between 2 RuvA tetramers; dsDNA enters through RuvA and exits via RuvB. An RuvB hexamer assembles on each DNA strand where it exits the tetramer. Each RuvB hexamer is contacted by two RuvA subunits (via domain III) on 2 adjacent RuvB subunits; this complex drives branch migration. In the full resolvosome a probable DNA-RuvA(4)-RuvB(12)-RuvC(2) complex forms which resolves the HJ.

The protein localises to the cytoplasm. The RuvA-RuvB-RuvC complex processes Holliday junction (HJ) DNA during genetic recombination and DNA repair, while the RuvA-RuvB complex plays an important role in the rescue of blocked DNA replication forks via replication fork reversal (RFR). RuvA specifically binds to HJ cruciform DNA, conferring on it an open structure. The RuvB hexamer acts as an ATP-dependent pump, pulling dsDNA into and through the RuvAB complex. HJ branch migration allows RuvC to scan DNA until it finds its consensus sequence, where it cleaves and resolves the cruciform DNA. This is Holliday junction branch migration complex subunit RuvA from Xanthobacter autotrophicus (strain ATCC BAA-1158 / Py2).